The following is a 334-amino-acid chain: Protein-methionine-sulfoxide reductase catalytic subunit MsrP (334 aa).

The tat-type signal signal peptide spans 1 to 44; that stretch reads MKKNQFLKESDVTAESVFFMKRRQVLKALGISATALSLPHAAHA. Residues asparagine 88, 91–92, cysteine 146, threonine 181, asparagine 233, arginine 238, and 249–251 each bind Mo-molybdopterin; these read YE and GIK.

The protein belongs to the MsrP family. Heterodimer of a catalytic subunit (MsrP) and a heme-binding subunit (MsrQ). Mo-molybdopterin serves as cofactor. In terms of processing, exported by the Tat system. Can also be exported by the Sec system.

The protein resides in the periplasm. The enzyme catalyses L-methionyl-[protein] + a quinone + H2O = L-methionyl-(S)-S-oxide-[protein] + a quinol. It catalyses the reaction L-methionyl-[protein] + a quinone + H2O = L-methionyl-(R)-S-oxide-[protein] + a quinol. In terms of biological role, part of the MsrPQ system that repairs oxidized periplasmic proteins containing methionine sulfoxide residues (Met-O), using respiratory chain electrons. Thus protects these proteins from oxidative-stress damage caused by reactive species of oxygen and chlorine. MsrPQ is essential for the maintenance of envelope integrity under bleach stress, rescuing a wide series of structurally unrelated periplasmic proteins from methionine oxidation, including the primary periplasmic chaperone SurA and the lipoprotein Pal. The catalytic subunit MsrP is non-stereospecific, being able to reduce both (R-) and (S-) diastereoisomers of methionine sulfoxide. Can catalyze the reduction of a variety of substrates in vitro, including dimethyl sulfoxide, trimethylamine N-oxide, phenylmethyl sulfoxide and L-methionine sulfoxide. Cannot reduce cyclic N-oxides. Shows no activity as sulfite oxidase. This Escherichia coli (strain K12) protein is Protein-methionine-sulfoxide reductase catalytic subunit MsrP.